Reading from the N-terminus, the 79-residue chain is ATP synthase subunit c (79 aa).

The next 2 membrane-spanning stretches (helical) occupy residues 11–31 and 53–73; these read IAVAIMIGLAAIGAAIGIGIL and FFVVMGLVDAIPMIAVGLGLY.

This sequence belongs to the ATPase C chain family. F-type ATPases have 2 components, F(1) - the catalytic core - and F(0) - the membrane proton channel. F(1) has five subunits: alpha(3), beta(3), gamma(1), delta(1), epsilon(1). F(0) has three main subunits: a(1), b(2) and c(10-14). The alpha and beta chains form an alternating ring which encloses part of the gamma chain. F(1) is attached to F(0) by a central stalk formed by the gamma and epsilon chains, while a peripheral stalk is formed by the delta and b chains.

The protein localises to the cell membrane. F(1)F(0) ATP synthase produces ATP from ADP in the presence of a proton or sodium gradient. F-type ATPases consist of two structural domains, F(1) containing the extramembraneous catalytic core and F(0) containing the membrane proton channel, linked together by a central stalk and a peripheral stalk. During catalysis, ATP synthesis in the catalytic domain of F(1) is coupled via a rotary mechanism of the central stalk subunits to proton translocation. Its function is as follows. Key component of the F(0) channel; it plays a direct role in translocation across the membrane. A homomeric c-ring of between 10-14 subunits forms the central stalk rotor element with the F(1) delta and epsilon subunits. In Buchnera aphidicola subsp. Schizaphis graminum (strain Sg), this protein is ATP synthase subunit c.